The chain runs to 117 residues: Ribosome maturation factor RimP (117 aa).

The protein belongs to the RimP family.

The protein localises to the cytoplasm. Functionally, required for maturation of 30S ribosomal subunits. The chain is Ribosome maturation factor RimP from Rickettsia prowazekii (strain Madrid E).